Consider the following 126-residue polypeptide: Small ribosomal subunit protein uS13 (126 aa).

Positions 95 to 126 are disordered; that stretch reads GLPVRGQQTRTNARTRKGKRKTVGGTKKAKAK. Basic residues predominate over residues 107–126; sequence ARTRKGKRKTVGGTKKAKAK.

The protein belongs to the universal ribosomal protein uS13 family. Part of the 30S ribosomal subunit. Forms a loose heterodimer with protein S19. Forms two bridges to the 50S subunit in the 70S ribosome.

Its function is as follows. Located at the top of the head of the 30S subunit, it contacts several helices of the 16S rRNA. In the 70S ribosome it contacts the 23S rRNA (bridge B1a) and protein L5 of the 50S subunit (bridge B1b), connecting the 2 subunits; these bridges are implicated in subunit movement. Contacts the tRNAs in the A and P-sites. The sequence is that of Small ribosomal subunit protein uS13 from Aquifex aeolicus (strain VF5).